Consider the following 206-residue polypeptide: MTKRTSAKYKIDRRMGENIWGRPKSPVNKREYGPGQHGQRRKNKLSDFGTQLRAKQKLKGYYGDLTEKQFRKIYAEAERVKGDTGEMLVGLLERRLDAIVYRAKFVPTVFAARQFVNHGHVTVNGQRVNIGSYRCKEGDVIQVRERSRQLAIVLEATQLAERDVPDYIEVDYSKMTATFVRTPSLGDVPYPVVMEPNLVVEFYAKN.

The interval 15–46 is disordered; it reads MGENIWGRPKSPVNKREYGPGQHGQRRKNKLS. Residues 94-157 enclose the S4 RNA-binding domain; it reads RRLDAIVYRA…RQLAIVLEAT (64 aa).

It belongs to the universal ribosomal protein uS4 family. As to quaternary structure, part of the 30S ribosomal subunit. Contacts protein S5. The interaction surface between S4 and S5 is involved in control of translational fidelity.

Functionally, one of the primary rRNA binding proteins, it binds directly to 16S rRNA where it nucleates assembly of the body of the 30S subunit. With S5 and S12 plays an important role in translational accuracy. This is Small ribosomal subunit protein uS4 from Cereibacter sphaeroides (strain ATCC 17025 / ATH 2.4.3) (Rhodobacter sphaeroides).